The sequence spans 1465 residues: DNA polymerase III polC-type (1465 aa).

The 157-residue stretch at 427 to 583 folds into the Exonuclease domain; that stretch reads YVVFDVETTG…YDAEATGRLL (157 aa).

The protein belongs to the DNA polymerase type-C family. PolC subfamily.

It localises to the cytoplasm. It catalyses the reaction DNA(n) + a 2'-deoxyribonucleoside 5'-triphosphate = DNA(n+1) + diphosphate. Its function is as follows. Required for replicative DNA synthesis. This DNA polymerase also exhibits 3' to 5' exonuclease activity. The polypeptide is DNA polymerase III polC-type (Streptococcus pyogenes serotype M3 (strain ATCC BAA-595 / MGAS315)).